Consider the following 233-residue polypeptide: Small ribosomal subunit protein uS3 (233 aa).

The 69-residue stretch at 39 to 107 (VRQFLASELT…PSQINIAEVR (69 aa)) folds into the KH type-2 domain.

Belongs to the universal ribosomal protein uS3 family. Part of the 30S ribosomal subunit. Forms a tight complex with proteins S10 and S14.

Its function is as follows. Binds the lower part of the 30S subunit head. Binds mRNA in the 70S ribosome, positioning it for translation. The polypeptide is Small ribosomal subunit protein uS3 (Baumannia cicadellinicola subsp. Homalodisca coagulata).